Consider the following 113-residue polypeptide: Nucleoid-associated protein EUBREC_0329 (113 aa).

A compositionally biased stretch (gly residues) spans 1-12; sequence MARRGGFPGGMP. The interval 1 to 45 is disordered; the sequence is MARRGGFPGGMPGNMNNLMKQAQKMQRQMEEAQKQLEDAEVTAKA. The segment covering 27–37 has biased composition (basic and acidic residues); that stretch reads RQMEEAQKQLE.

This sequence belongs to the YbaB/EbfC family. As to quaternary structure, homodimer.

It localises to the cytoplasm. The protein resides in the nucleoid. In terms of biological role, binds to DNA and alters its conformation. May be involved in regulation of gene expression, nucleoid organization and DNA protection. This is Nucleoid-associated protein EUBREC_0329 from Agathobacter rectalis (strain ATCC 33656 / DSM 3377 / JCM 17463 / KCTC 5835 / VPI 0990) (Eubacterium rectale).